The primary structure comprises 336 residues: Ventral anterior homeobox 1 (336 aa).

Residues Met1–Gly34 are compositionally biased toward basic and acidic residues. Disordered stretches follow at residues Met1–Leu39 and Ala50–Ala69. A DNA-binding region (homeobox) is located at residues Pro100–Gln159. The span at Pro236 to Gly250 shows a compositional bias: low complexity. Disordered regions lie at residues Pro236–Ala267 and Ser316–Asp336. A compositionally biased stretch (basic and acidic residues) spans Asn325 to Asp336.

The protein belongs to the EMX homeobox family.

It is found in the nucleus. Transcription factor that may function in dorsoventral specification of the forebrain. Required for axon guidance and major tract formation in the developing forebrain. May contribute to the differentiation of the neuroretina, pigmented epithelium and optic stalk. In Rattus norvegicus (Rat), this protein is Ventral anterior homeobox 1 (Vax1).